We begin with the raw amino-acid sequence, 153 residues long: Heavy metal-associated isoprenylated plant protein 26 (153 aa).

One can recognise an HMA domain in the interval 25 to 89 (LQTVEIKVKM…MSHRTGKKVE (65 aa)). Positions 36 and 39 each coordinate a metal cation. C150 carries the cysteine methyl ester modification. C150 carries the S-farnesyl cysteine lipid modification. A propeptide spans 151–153 (VVM) (removed in mature form).

Belongs to the HIPP family. Interacts with ZHD11/HB29 and ACBP2 (via ankyrin repeats). May also interact with HB21. As to expression, expressed in roots, stems and flowers. Lower expression in siliques and leaves. Expressed in the vascular tissues. Detected in lateral roots, shoot apical meristem, petals of unopened flowers and weak expression in leaf vasculature.

The protein resides in the nucleus membrane. The protein localises to the cell membrane. Its function is as follows. Heavy-metal-binding protein. Binds lead, cadmium and copper. May be involved in heavy-metal transport. May be involved in cadmium transport and play a role in cadmium detoxification. This Arabidopsis thaliana (Mouse-ear cress) protein is Heavy metal-associated isoprenylated plant protein 26.